Here is a 365-residue protein sequence, read N- to C-terminus: Homeobox protein knotted-1-like 7 (365 aa).

The span at 1–11 shows a compositional bias: basic and acidic residues; sequence MEELEGHRGEG. The tract at residues 1–20 is disordered; that stretch reads MEELEGHRGEGRLPPPPPLL. Positions 227–247 constitute an ELK domain; that stretch reads ALKRHLLRKYSGYLGGLRKEL. The segment at residues 248–311 is a DNA-binding region (homeobox; TALE-type); it reads SKKRKKGKLP…NQRKRHWKPT (64 aa).

Belongs to the TALE/KNOX homeobox family.

It is found in the nucleus. Functionally, probable transcription factor that may be involved in shoot formation during embryogenesis. The sequence is that of Homeobox protein knotted-1-like 7 (OSH3) from Oryza sativa subsp. japonica (Rice).